The following is a 134-amino-acid chain: Fluoride-specific ion channel FluC (134 aa).

4 helical membrane-spanning segments follow: residues Leu7 to Ala27, Gly38 to Val58, Leu69 to Ser89, and Val110 to His130. Na(+) contacts are provided by Gly77 and Thr80.

The protein belongs to the fluoride channel Fluc/FEX (TC 1.A.43) family.

It localises to the cell inner membrane. It catalyses the reaction fluoride(in) = fluoride(out). With respect to regulation, na(+) is not transported, but it plays an essential structural role and its presence is essential for fluoride channel function. Its function is as follows. Fluoride-specific ion channel. Important for reducing fluoride concentration in the cell, thus reducing its toxicity. The polypeptide is Fluoride-specific ion channel FluC (Legionella pneumophila (strain Lens)).